Reading from the N-terminus, the 316-residue chain is Probable cobalamin biosynthesis protein CobD (316 aa).

The next 5 membrane-spanning stretches (helical) occupy residues 1–21 (MITEIFPFSVLILALLIDIVL), 50–70 (ISGMIISVLVISGAVLAGFAL), 89–109 (ILALIISSYLLKSTFAFKSLI), 165–185 (PLFYYVLFSCAGLGVEAALAF), and 294–314 (ISLIGRAMVLAALLSALLLIL).

Belongs to the CobD/CbiB family.

It is found in the cell membrane. It participates in cofactor biosynthesis; adenosylcobalamin biosynthesis. In terms of biological role, converts cobyric acid to cobinamide by the addition of aminopropanol on the F carboxylic group. The chain is Probable cobalamin biosynthesis protein CobD from Methanothrix thermoacetophila (strain DSM 6194 / JCM 14653 / NBRC 101360 / PT) (Methanosaeta thermophila).